The sequence spans 223 residues: Phosphoribosylformylglycinamidine synthase subunit PurQ (223 aa).

One can recognise a Glutamine amidotransferase type-1 domain in the interval 2–223 (KVAIIRFPGT…LLENFINFNF (222 aa)). Cysteine 84 serves as the catalytic Nucleophile. Active-site residues include histidine 192 and glutamate 194.

As to quaternary structure, part of the FGAM synthase complex composed of 1 PurL, 1 PurQ and 2 PurS subunits.

The protein localises to the cytoplasm. The enzyme catalyses N(2)-formyl-N(1)-(5-phospho-beta-D-ribosyl)glycinamide + L-glutamine + ATP + H2O = 2-formamido-N(1)-(5-O-phospho-beta-D-ribosyl)acetamidine + L-glutamate + ADP + phosphate + H(+). It carries out the reaction L-glutamine + H2O = L-glutamate + NH4(+). It participates in purine metabolism; IMP biosynthesis via de novo pathway; 5-amino-1-(5-phospho-D-ribosyl)imidazole from N(2)-formyl-N(1)-(5-phospho-D-ribosyl)glycinamide: step 1/2. In terms of biological role, part of the phosphoribosylformylglycinamidine synthase complex involved in the purines biosynthetic pathway. Catalyzes the ATP-dependent conversion of formylglycinamide ribonucleotide (FGAR) and glutamine to yield formylglycinamidine ribonucleotide (FGAM) and glutamate. The FGAM synthase complex is composed of three subunits. PurQ produces an ammonia molecule by converting glutamine to glutamate. PurL transfers the ammonia molecule to FGAR to form FGAM in an ATP-dependent manner. PurS interacts with PurQ and PurL and is thought to assist in the transfer of the ammonia molecule from PurQ to PurL. The chain is Phosphoribosylformylglycinamidine synthase subunit PurQ from Campylobacter jejuni subsp. jejuni serotype O:2 (strain ATCC 700819 / NCTC 11168).